Consider the following 363-residue polypeptide: Transcriptional regulator AacuR (363 aa).

The disordered stretch occupies residues 1–24 (MTSLQCPPPDRTRRSLSPTGPKFR). Positions 27-54 (CKSCAASKIRCTKEKPQCARCVKRNMVC) form a DNA-binding region, zn(2)-C6 fungal-type. The span at 63-72 (RRKPGARLKH) shows a compositional bias: basic residues. Positions 63–104 (RRKPGARLKHRESITTNAHHSPTTTTITTSRTTSSSPSASPK) are disordered. Over residues 76–102 (ITTNAHHSPTTTTITTSRTTSSSPSAS) the composition is skewed to low complexity.

Its subcellular location is the nucleus. Its function is as follows. Transcriptional regulator; part of the gene cluster that mediates the biosynthesis of the tetrahydroxanthone dimer secalonic acid D. The sequence is that of Transcriptional regulator AacuR from Aspergillus aculeatus (strain ATCC 16872 / CBS 172.66 / WB 5094).